We begin with the raw amino-acid sequence, 205 residues long: ATP phosphoribosyltransferase (205 aa).

This sequence belongs to the ATP phosphoribosyltransferase family. Short subfamily. In terms of assembly, heteromultimer composed of HisG and HisZ subunits.

The protein localises to the cytoplasm. It carries out the reaction 1-(5-phospho-beta-D-ribosyl)-ATP + diphosphate = 5-phospho-alpha-D-ribose 1-diphosphate + ATP. It functions in the pathway amino-acid biosynthesis; L-histidine biosynthesis; L-histidine from 5-phospho-alpha-D-ribose 1-diphosphate: step 1/9. Catalyzes the condensation of ATP and 5-phosphoribose 1-diphosphate to form N'-(5'-phosphoribosyl)-ATP (PR-ATP). Has a crucial role in the pathway because the rate of histidine biosynthesis seems to be controlled primarily by regulation of HisG enzymatic activity. This Nitratiruptor sp. (strain SB155-2) protein is ATP phosphoribosyltransferase.